Here is a 526-residue protein sequence, read N- to C-terminus: GMP synthase [glutamine-hydrolyzing] (526 aa).

A Glutamine amidotransferase type-1 domain is found at 13 to 204 (TVLVVDFGAQ…LYRGAGLSPD (192 aa)). Cys-90 serves as the catalytic Nucleophile. Catalysis depends on residues His-178 and Glu-180. In terms of domain architecture, GMPS ATP-PPase spans 205 to 400 (WTTGNVIEEQ…LGLPDEIVQR (196 aa)). 232 to 238 (SGGVDSA) serves as a coordination point for ATP.

Homodimer.

The enzyme catalyses XMP + L-glutamine + ATP + H2O = GMP + L-glutamate + AMP + diphosphate + 2 H(+). Its pathway is purine metabolism; GMP biosynthesis; GMP from XMP (L-Gln route): step 1/1. Its function is as follows. Catalyzes the synthesis of GMP from XMP. The chain is GMP synthase [glutamine-hydrolyzing] (guaA) from Streptomyces coelicolor (strain ATCC BAA-471 / A3(2) / M145).